The primary structure comprises 538 residues: Guanine nucleotide-binding protein-like 3 (538 aa).

The segment covering 1–45 has biased composition (basic residues); sequence MKRPKLKKASKRMTCHKRYKIQKKVREHHRKLRKEAKKRGHKKPR. Disordered stretches follow at residues 1 to 57 and 69 to 126; these read MKRP…APFK and QQLE…NPKK. Positions 2-46 are basic; sequence KRPKLKKASKRMTCHKRYKIQKKVREHHRKLRKEAKKRGHKKPRK. A coiled-coil region spans residues 54 to 95; sequence APFKEALLREAELRKQQLEELKQQQKLDRQKEQERKRKLEVS. The span at 69-93 shows a compositional bias: basic and acidic residues; sequence QQLEELKQQQKLDRQKEQERKRKLE. N6-acetyllysine is present on lysine 79. Lysine 91 is covalently cross-linked (Glycyl lysine isopeptide (Lys-Gly) (interchain with G-Cter in SUMO2)). Serine 95 and serine 101 each carry phosphoserine. Positions 114–126 are enriched in basic residues; the sequence is RKKAKAGKQNPKK. In terms of domain architecture, CP-type G spans 129–307; it reads CQELKKVIEA…IIDSPCLIIS (179 aa). 176 to 179 provides a ligand contact to GTP; that stretch reads NKSD. Residues lysine 177, lysine 248, lysine 262, and lysine 270 each participate in a glycyl lysine isopeptide (Lys-Gly) (interchain with G-Cter in SUMO2) cross-link. 256-263 contributes to the GTP binding site; sequence GFPNVGKS. Positions 277 to 451 are intermediate; sequence VGISMGLTRS…HLTNRILFRS (175 aa). Position 300 to 303 (300 to 303) interacts with GTP; it reads DSPC. Residues 460–475 show a composition bias toward basic and acidic residues; the sequence is DEKDIVEESPRQTEDK. The acidic stretch occupies residues 460–532; the sequence is DEKDIVEESP…RASQEDETYD (73 aa). The segment at 460–538 is disordered; sequence DEKDIVEESP…ETYDFTTDYI (79 aa). Residues serine 493, serine 505, and serine 518 each carry the phosphoserine modification. Positions 506-518 are enriched in polar residues; sequence PEQSTAGKPSDGS.

The protein belongs to the TRAFAC class YlqF/YawG GTPase family. As to quaternary structure, interacts with MDM2; this interaction stabilizes MDM2. Interaction with MDM2 occurs in the nucleoplasm and is triggered by a nucleolar release mechanism, such as mitosis-induced nucleolar disassembly. Indirectly interacts with TP53, via MDM2-binding. Interacts with TSC22D1 isoform 2. In terms of tissue distribution, expressed in the adult bone marrow population that is enriched in hematopoietic stem cells.

It localises to the nucleus. It is found in the nucleolus. May be required to maintain the proliferative capacity of stem cells. Stabilizes MDM2 by preventing its ubiquitination, and hence proteasomal degradation. The protein is Guanine nucleotide-binding protein-like 3 (Gnl3) of Mus musculus (Mouse).